Reading from the N-terminus, the 146-residue chain is D-aminoacyl-tRNA deacylase (146 aa).

The Gly-cisPro motif, important for rejection of L-amino acids motif lies at 137 to 138 (GP).

It belongs to the DTD family. As to quaternary structure, homodimer.

Its subcellular location is the cytoplasm. It catalyses the reaction glycyl-tRNA(Ala) + H2O = tRNA(Ala) + glycine + H(+). The enzyme catalyses a D-aminoacyl-tRNA + H2O = a tRNA + a D-alpha-amino acid + H(+). Functionally, an aminoacyl-tRNA editing enzyme that deacylates mischarged D-aminoacyl-tRNAs. Also deacylates mischarged glycyl-tRNA(Ala), protecting cells against glycine mischarging by AlaRS. Acts via tRNA-based rather than protein-based catalysis; rejects L-amino acids rather than detecting D-amino acids in the active site. By recycling D-aminoacyl-tRNA to D-amino acids and free tRNA molecules, this enzyme counteracts the toxicity associated with the formation of D-aminoacyl-tRNA entities in vivo and helps enforce protein L-homochirality. The polypeptide is D-aminoacyl-tRNA deacylase (Bacillus mycoides (strain KBAB4) (Bacillus weihenstephanensis)).